The sequence spans 678 residues: DNA ligase (678 aa).

NAD(+) contacts are provided by residues 35–39 (DSVYD), 84–85 (SL), and glutamate 116. The N6-AMP-lysine intermediate role is filled by lysine 118. Residues arginine 139, glutamate 178, lysine 297, and lysine 321 each coordinate NAD(+). Positions 415, 418, 433, and 438 each coordinate Zn(2+). Residues 600 to 678 (DGNQIFAGKT…EAQLLEMLNE (79 aa)) enclose the BRCT domain.

Belongs to the NAD-dependent DNA ligase family. LigA subfamily. Mg(2+) is required as a cofactor. It depends on Mn(2+) as a cofactor.

The enzyme catalyses NAD(+) + (deoxyribonucleotide)n-3'-hydroxyl + 5'-phospho-(deoxyribonucleotide)m = (deoxyribonucleotide)n+m + AMP + beta-nicotinamide D-nucleotide.. In terms of biological role, DNA ligase that catalyzes the formation of phosphodiester linkages between 5'-phosphoryl and 3'-hydroxyl groups in double-stranded DNA using NAD as a coenzyme and as the energy source for the reaction. It is essential for DNA replication and repair of damaged DNA. This chain is DNA ligase, found in Nostoc punctiforme (strain ATCC 29133 / PCC 73102).